A 148-amino-acid polypeptide reads, in one-letter code: Aspartate carbamoyltransferase regulatory chain (148 aa).

Positions 106, 111, 134, and 137 each coordinate Zn(2+).

It belongs to the PyrI family. In terms of assembly, contains catalytic and regulatory chains. Requires Zn(2+) as cofactor.

Involved in allosteric regulation of aspartate carbamoyltransferase. This Methanococcus maripaludis (strain C7 / ATCC BAA-1331) protein is Aspartate carbamoyltransferase regulatory chain.